Consider the following 399-residue polypeptide: Fe-coproporphyrin III synthase (399 aa).

Residues 36 to 253 (KDKKPVVVWN…TRKLHEKGFP (218 aa)) enclose the Radical SAM core domain. 3 residues coordinate [4Fe-4S] cluster: Cys50, Cys54, and Cys57.

The protein belongs to the radical SAM superfamily. It depends on [4Fe-4S] cluster as a cofactor.

It catalyses the reaction 12,18-didecarboxysiroheme + 2 AH2 + 2 S-adenosyl-L-methionine = Fe-coproporphyrin III + 2 5'-deoxyadenosine + 2 L-methionine + 2 acetate + 2 A + 2 H(+). It participates in porphyrin-containing compound metabolism; protoheme biosynthesis. Involved in siroheme-dependent heme b biosynthesis. Catalyzes the conversion of didecarboxysiroheme into Fe-coproporphyrin III by oxidative loss of two acetic acid side chains. This chain is Fe-coproporphyrin III synthase, found in Methanosarcina barkeri (strain Fusaro / DSM 804).